The primary structure comprises 105 residues: Small ribosomal subunit protein uS10 (105 aa).

This sequence belongs to the universal ribosomal protein uS10 family. In terms of assembly, part of the 30S ribosomal subunit.

Its function is as follows. Involved in the binding of tRNA to the ribosomes. This Nostoc punctiforme (strain ATCC 29133 / PCC 73102) protein is Small ribosomal subunit protein uS10.